Consider the following 138-residue polypeptide: Large ribosomal subunit protein uL16 (138 aa).

Belongs to the universal ribosomal protein uL16 family. In terms of assembly, part of the 50S ribosomal subunit.

Functionally, binds 23S rRNA and is also seen to make contacts with the A and possibly P site tRNAs. This Anaeromyxobacter sp. (strain Fw109-5) protein is Large ribosomal subunit protein uL16.